We begin with the raw amino-acid sequence, 1288 residues long: Contactin-associated protein-like 3B (1288 aa).

The first 25 residues, 1 to 25 (MASVAWAVLKVLLLLPTQTWSPVGA), serve as a signal peptide directing secretion. Residues 23-61 (VGAGNPPDCDSPLASALPRSSFSSSSELSSSHGPGFSRL) form a disordered region. At 26 to 1245 (GNPPDCDSPL…LVNADRRDSA (1220 aa)) the chain is on the extracellular side. The region spanning 31–177 (CDSPLASALP…IGMRIEVYGC (147 aa)) is the F5/8 type C domain. 6 disulfides stabilise this stretch: Cys31–Cys177, Cys332–Cys364, Cys513–Cys545, Cys551–Cys562, Cys556–Cys571, and Cys573–Cys583. Low complexity predominate over residues 33 to 59 (SPLASALPRSSFSSSSELSSSHGPGFS). Laminin G-like domains are found at residues 183–364 (VVYF…SFSC) and 370–545 (VPVT…IDSC). Asn359 carries N-linked (GlcNAc...) asparagine glycosylation. The 38-residue stretch at 547–584 (ITDRCLPSYCEHGGECSQSWDTFSCDCLGTGYTGETCH) folds into the EGF-like 1 domain. Positions 585–792 (SSLYEQSCEA…LLCRGDKSFW (208 aa)) constitute a Fibrinogen C-terminal domain. The N-linked (GlcNAc...) asparagine glycan is linked to Asn706. In terms of domain architecture, Laminin G-like 3 spans 793–958 (NSASFNTETS…TVTPGVEPGC (166 aa)). 5 disulfide bridges follow: Cys931–Cys958, Cys962–Cys975, Cys969–Cys984, Cys986–Cys996, and Cys1167–Cys1203. One can recognise an EGF-like 2 domain in the interval 959-997 (AGHCSTYGHLCRNGGRCREKRRGVTCDCAFSAYDGPFCS). The Laminin G-like 4 domain occupies 1016 to 1203 (EHYTLSENSS…RGHVAPMARC (188 aa)). A disordered region spans residues 1215-1236 (ELAPRLAGGAGRSGPVDEGEPL). Residues 1246-1266 (VIGGVIAVEIFILLCITAIAI) traverse the membrane as a helical segment. Residues 1267 to 1288 (RIYQQRKLRKENESKVSKKEEC) are Cytoplasmic-facing.

This sequence belongs to the neurexin family.

The protein resides in the membrane. The sequence is that of Contactin-associated protein-like 3B (CNTNAP3B) from Homo sapiens (Human).